Here is a 688-residue protein sequence, read N- to C-terminus: Sodium channel and clathrin linker 1 (688 aa).

Position 2 is an N-acetylalanine (A2). Coiled-coil stretches lie at residues L59 to K108 and Q152 to T673. S681 bears the Phosphoserine mark.

As to quaternary structure, interacts with SCN10A and clathrin. Identified in a complex containing SCN10A, clathrin and SCLT1.

The protein localises to the cytoplasm. The protein resides in the cytoskeleton. Its subcellular location is the microtubule organizing center. It is found in the centrosome. It localises to the centriole. In terms of biological role, adapter protein that links SCN10A to clathrin. Regulates SCN10A channel activity, possibly by promoting channel internalization. The protein is Sodium channel and clathrin linker 1 (Sclt1) of Mus musculus (Mouse).